Consider the following 426-residue polypeptide: Putative FBD-associated F-box protein At5g53635 (426 aa).

One can recognise an F-box domain in the interval 1-45 (MISQLPDPLICHILSHLPIKDLVTTRVLSTRWRSLWLWLPCLELN). In terms of domain architecture, FBD spans 353–405 (MIQFGSSLVPECLLSSLEFVDIRIPFRGHLEVMKLVRYFLENSAILKKLSLDH).

In Arabidopsis thaliana (Mouse-ear cress), this protein is Putative FBD-associated F-box protein At5g53635.